Reading from the N-terminus, the 177-residue chain is Large ribosomal subunit protein uL6 (177 aa).

The protein belongs to the universal ribosomal protein uL6 family. As to quaternary structure, part of the 50S ribosomal subunit.

Functionally, this protein binds to the 23S rRNA, and is important in its secondary structure. It is located near the subunit interface in the base of the L7/L12 stalk, and near the tRNA binding site of the peptidyltransferase center. This chain is Large ribosomal subunit protein uL6, found in Cupriavidus necator (strain ATCC 17699 / DSM 428 / KCTC 22496 / NCIMB 10442 / H16 / Stanier 337) (Ralstonia eutropha).